Here is a 924-residue protein sequence, read N- to C-terminus: Phosphatidate phosphatase LPIN1 (924 aa).

An N-LIP region spans residues 1 to 108 (MNYVGQLAGQ…IPMYLATSPI (108 aa)). Residues serine 106 and serine 150 each carry the phosphoserine modification. Disordered regions lie at residues 133–248 (PTTA…DCQR) and 269–297 (FHAS…ADRL). The segment covering 152 to 161 (GKKRRKRRRK) has biased composition (basic residues). Positions 153-158 (KKRRKR) match the Nuclear localization signal motif. Residues 162–172 (AQLDNLKRDDN) show a composition bias toward basic and acidic residues. A compositionally biased stretch (acidic residues) spans 176-193 (SEDEDMFPIEMSSDEDTA). Polar residues-rich tracts occupy residues 218-229 (PSISTHPQSASY) and 273-284 (ESPSGSRPSTPK). 3 positions are modified to phosphoserine: serine 285, serine 287, and serine 293. A compositionally biased stretch (basic and acidic residues) spans 285–297 (SDSELVSKSADRL). Position 298 is a phosphothreonine (threonine 298). Disordered regions lie at residues 314 to 426 (QAAK…SRHL) and 446 to 490 (LYFP…STSD). Position 328 is a phosphoserine (serine 328). The span at 343-358 (AIHSESSDTFSDQSPT) shows a compositional bias: polar residues. Phosphoserine is present on serine 392. Positions 404–413 (NTAQSSSKTD) are enriched in polar residues. Lysine 459 carries the N6-acetyllysine modification. Over residues 461 to 476 (ASDNGARSANQSPQSV) the composition is skewed to polar residues. Phosphoserine is present on residues serine 468, serine 472, and serine 483. Residues lysine 599 and lysine 629 each participate in a glycyl lysine isopeptide (Lys-Gly) (interchain with G-Cter in SUMO) cross-link. Residues 627–649 (RIKHESSSSDEEHAAAKPSGSSH) form a disordered region. Positions 628–641 (IKHESSSSDEEHAA) are enriched in basic and acidic residues. N6-acetyllysine is present on lysine 629. Serine 634 and serine 635 each carry phosphoserine. A C-LIP region spans residues 658 to 864 (YKKTLRLTSE…VNPKGELVQE (207 aa)). The DXDXT motif motif lies at 712-716 (DIDGT). The LXXIL motif signature appears at 723 to 727 (LGHIL). Serine 921 and serine 923 each carry phosphoserine.

This sequence belongs to the lipin family. As to quaternary structure, interacts (via LXXIL motif) with PPARA. Interacts with PPARGC1A. Interaction with PPARA and PPARGC1A leads to the formation of a complex that modulates gene transcription. Interacts with MEF2C. Mg(2+) serves as cofactor. Phosphorylated at multiple sites in response to insulin. Phosphorylation is controlled by the mTOR signaling pathway. Phosphorylation is decreased by epinephrine. Phosphorylation may not directly affect the catalytic activity but may regulate the localization. Dephosphorylated by the CTDNEP1-CNEP1R1 complex. In terms of processing, phosphorylated at multiple sites by mTOR in response to insulin, leading to its inactivation. Phosphorylation does not affect the catalytic activity but regulates the localization. Phosphorylation is decreased by epinephrine. Dephosphorylated by the CTDNEP1-CNEP1R1 complex. Dephosphorylation following mTOR inhibition promotes its activity. Post-translationally, sumoylation is important in brain and is marginal in other tissues. Sumoylation facilitates nuclear localization of isoform 2 in neuronals cells and its transcriptional coactivator activity. Acetylation at Lys-459 and Lys-629 by KAT5 in response to fatty acids promotes translocation to the endoplasmic reticulum and synthesis of diacylglycerol. As to expression, specifically expressed in skeletal muscle. Also expressed prominently in adipose tissue, and testis. Lower expression also detected in kidney, lung, brain and liver. Predominant isoform in the liver. In terms of tissue distribution, predominant isoform in the brain.

Its subcellular location is the mitochondrion outer membrane. The protein resides in the cytoplasm. It localises to the nucleus membrane. The protein localises to the nucleus. It is found in the endoplasmic reticulum membrane. It catalyses the reaction a 1,2-diacyl-sn-glycero-3-phosphate + H2O = a 1,2-diacyl-sn-glycerol + phosphate. The catalysed reaction is 1-octadecanoyl-2-(4Z,7Z,10Z,13Z,16Z,19Z-docosahexaenoyl)-sn-glycero-3-phosphate + H2O = 1-octadecanoyl-2-(4Z,7Z,10Z,13Z,16Z,19Z-docosahexaenoyl)-sn-glycerol + phosphate. It carries out the reaction 1-octadecanoyl-2-(5Z,8Z,11Z,14Z-eicosatetraenoyl)-sn-glycero-3-phosphate + H2O = 1-octadecanoyl-2-(5Z,8Z,11Z,14Z-eicosatetraenoyl)-sn-glycerol + phosphate. The enzyme catalyses 1-octadecanoyl-2-(9Z,12Z-octadecadienoyl)-sn-glycero-3-phosphate + H2O = 1-octadecanoyl-2-(9Z,12Z)-octadecadienoyl-sn-glycerol + phosphate. It catalyses the reaction 1-octadecanoyl-2-(9Z-octadecenoyl)-sn-glycero-3-phosphate + H2O = 1-octadecanoyl-2-(9Z-octadecenoyl)-sn-glycerol + phosphate. The catalysed reaction is 1-hexadecanoyl-2-(4Z,7Z,10Z,13Z,16Z,19Z-docosahexaenoyl)-sn-glycero-3-phosphate + H2O = 1-hexadecanoyl-2-(4Z,7Z,10Z,13Z,16Z,19Z-docosahexaenoyl)-sn-glycerol + phosphate. It carries out the reaction 1,2-dioctadecanoyl-sn-glycero-3-phosphate + H2O = 1,2-dioctadecanoyl-sn-glycerol + phosphate. The enzyme catalyses 1-hexadecanoyl-2-(5Z,8Z,11Z,14Z-eicosatetraenoyl)-sn-glycero-3-phosphate + H2O = 1-hexadecanoyl-2-(5Z,8Z,11Z,14Z-eicosatetraenoyl)-sn-glycerol + phosphate. It catalyses the reaction 1-hexadecanoyl-2-(9Z,12Z-octadecadienoyl)-sn-glycero-3-phosphate + H2O = 1-hexadecanoyl-2-(9Z,12Z-octadecadienoyl)-sn-glycerol + phosphate. The catalysed reaction is 1-hexadecanoyl-2-(9Z-octadecenoyl)-sn-glycero-3-phosphate + H2O = 1-hexadecanoyl-2-(9Z-octadecenoyl)-sn-glycerol + phosphate. It carries out the reaction 1,2-di-(4Z,7Z,10Z,13Z,16Z,19Z-docosahexaenoyl)-sn-glycero-3-phosphate + H2O = 1,2-di-(4Z,7Z,10Z,13Z,16Z,19Z-docosahexaenoyl)-sn-glycerol + phosphate. The enzyme catalyses 1,2-di-(5Z,8Z,11Z,14Z)-eicosatetraenoyl-sn-glycero-3-phosphate + H2O = 1,2-di-(5Z,8Z,11Z,14Z)-eicosatetraenoyl-sn-glycerol + phosphate. It catalyses the reaction 1,2-di-(9Z,12Z-octadecadienoyl)-sn-glycero-3-phosphate + H2O = 1,2-di-(9Z,12Z-octadecadienoyl)-sn-glycerol + phosphate. The catalysed reaction is 1,2-di-(9Z-octadecenoyl)-sn-glycero-3-phosphate + H2O = 1,2-di-(9Z-octadecenoyl)-sn-glycerol + phosphate. It carries out the reaction 1,2-dihexadecanoyl-sn-glycero-3-phosphate + H2O = 1,2-dihexadecanoyl-sn-glycerol + phosphate. Its activity is regulated as follows. Inhibited by N-ethylmaleimide treatment. Functionally, acts as a magnesium-dependent phosphatidate phosphatase enzyme which catalyzes the conversion of phosphatidic acid to diacylglycerol during triglyceride, phosphatidylcholine and phosphatidylethanolamine biosynthesis and therefore controls the metabolism of fatty acids at different levels. Is involved in adipocyte differentiation. Also acts as nuclear transcriptional coactivator for PPARGC1A/PPARA regulatory pathway to modulate lipid metabolism gene expression. Recruited at the mitochondrion outer membrane and is involved in mitochondrial fission by converting phosphatidic acid to diacylglycerol. This chain is Phosphatidate phosphatase LPIN1 (Lpin1), found in Mus musculus (Mouse).